We begin with the raw amino-acid sequence, 338 residues long: Methionine synthase (338 aa).

Zn(2+)-binding residues include H210, C212, E234, and C294.

The protein belongs to the archaeal MetE family. Zn(2+) is required as a cofactor.

It functions in the pathway amino-acid biosynthesis; L-methionine biosynthesis via de novo pathway. Functionally, catalyzes the transfer of a methyl group to L-homocysteine resulting in methionine formation. The physiological methyl donor is unknown. The sequence is that of Methionine synthase from Pyrococcus horikoshii (strain ATCC 700860 / DSM 12428 / JCM 9974 / NBRC 100139 / OT-3).